The primary structure comprises 186 residues: MAIPATQMRPGMIIKHNGELHAVFSVEHRTPGNLRAFIQAKLRNLRSGAMFEHRFRSPDPIERVIVDEIPMEFLYNDGDDYYFMNTENFEQTHLKRDTLGDAVEYLTANLQITVSFFDGVAVGIELPQTVELTVVETEPGLKSATASSVTKPATLETGLVVQVPPFINEGEKIRVDTAEGAYLSRA.

It belongs to the elongation factor P family.

The protein localises to the cytoplasm. Its pathway is protein biosynthesis; polypeptide chain elongation. Functionally, involved in peptide bond synthesis. Stimulates efficient translation and peptide-bond synthesis on native or reconstituted 70S ribosomes in vitro. Probably functions indirectly by altering the affinity of the ribosome for aminoacyl-tRNA, thus increasing their reactivity as acceptors for peptidyl transferase. This is Elongation factor P from Acidobacterium capsulatum (strain ATCC 51196 / DSM 11244 / BCRC 80197 / JCM 7670 / NBRC 15755 / NCIMB 13165 / 161).